Here is a 164-residue protein sequence, read N- to C-terminus: Aspartate carbamoyltransferase regulatory chain (164 aa).

4 residues coordinate Zn(2+): cysteine 116, cysteine 121, cysteine 146, and cysteine 149.

The protein belongs to the PyrI family. As to quaternary structure, contains catalytic and regulatory chains. Zn(2+) serves as cofactor.

Functionally, involved in allosteric regulation of aspartate carbamoyltransferase. The polypeptide is Aspartate carbamoyltransferase regulatory chain (Staphylothermus marinus (strain ATCC 43588 / DSM 3639 / JCM 9404 / F1)).